A 188-amino-acid chain; its full sequence is HGPRTase-like protein 1 (188 aa).

It belongs to the purine/pyrimidine phosphoribosyltransferase family. Archaeal HPRT subfamily.

Functionally, may catalyze a purine salvage reaction, the substrate is unknown. This is HGPRTase-like protein 1 from Haloquadratum walsbyi (strain DSM 16854 / JCM 12705 / C23).